The sequence spans 94 residues: Large ribosomal subunit protein uL23 (94 aa).

Belongs to the universal ribosomal protein uL23 family. As to quaternary structure, part of the 50S ribosomal subunit. Contacts protein L29, and trigger factor when it is bound to the ribosome.

In terms of biological role, one of the early assembly proteins it binds 23S rRNA. One of the proteins that surrounds the polypeptide exit tunnel on the outside of the ribosome. Forms the main docking site for trigger factor binding to the ribosome. The sequence is that of Large ribosomal subunit protein uL23 from Geobacter metallireducens (strain ATCC 53774 / DSM 7210 / GS-15).